Here is a 220-residue protein sequence, read N- to C-terminus: Urease accessory protein UreF (220 aa).

It belongs to the UreF family. UreD, UreF and UreG form a complex that acts as a GTP-hydrolysis-dependent molecular chaperone, activating the urease apoprotein by helping to assemble the nickel containing metallocenter of UreC. The UreE protein probably delivers the nickel.

The protein localises to the cytoplasm. Required for maturation of urease via the functional incorporation of the urease nickel metallocenter. This chain is Urease accessory protein UreF, found in Bordetella parapertussis (strain 12822 / ATCC BAA-587 / NCTC 13253).